Reading from the N-terminus, the 495-residue chain is Thiosulfate sulfurtransferase/rhodanese-like domain-containing protein 2 (495 aa).

Phosphoserine is present on serine 268. The Rhodanese domain occupies 300-395 (EQGNTIILDC…YLEEFPDGFY (96 aa)). The active-site Cysteine persulfide intermediate is cysteine 354.

This Mus musculus (Mouse) protein is Thiosulfate sulfurtransferase/rhodanese-like domain-containing protein 2 (Tstd2).